A 366-amino-acid polypeptide reads, in one-letter code: MASSKKQKKKMHRPHNRKLMIRDLPVGAAYLLHPSLRGILLSRPKRWNSGSPSHRIAVNLVRKYKKQLKPRVLPFFCDHCRLASRTLLHIKEHVCDKEEKRKAARKEESRKFADYDVTNEIKLATNSEKQWRFNAMAVLEQTLRPNKVAPKKVEIEEDPGIDQLLDSEPDQEFYDAQEQEFEDDTPHYPIKDVLVPSSQPPRPKVTLKSSECLGHNDAGVFCFNCKGSFDSYNQFQLHLNEDYNDGKCNRALPEYYYVQRHDRTHMFDKRYKHSVQHHKPIKRDISHIQCTLCKAVNFASTGDLYAHMVKCASSTTNEDKESAIDCPTAFGYGMPPSFNACQYVFPDPAKERYSRNSRGSKEPVES.

This is an uncharacterized protein from Caenorhabditis elegans.